The following is a 319-amino-acid chain: MVEAVKVSELVKDVPSLKIIEGKEYLSQKLIDTSDISRPGLELTGYFDFYPKNRIQLLGRTEISYSARLDHDLRERVFNKMATPETPCFIVSRGLPIPSEMLEAAEKEKIPVFSSNMATTHLSSVITQFLDEKLAPRKSIHGVLVEIYGMGVLIIGNSGVGKSETALDLVKRGHRLIADDRVDVYQKDDKTVVGEAPKILKHLMEIRGIGIIDVMNLFGAGAVKDSTEIQLIICLQNWDPKANYDRLGFNEKTREIFEVDVPQVTVPVKVGRNLAIIIEVAAMNFRAKKMGYDASQKFEQNLTELISDNSKKDEGESKK.

Residues His141 and Lys162 contribute to the active site. 156–163 (GNSGVGKS) lines the ATP pocket. Ser163 lines the Mg(2+) pocket. The active-site Proton acceptor; for phosphorylation activity. Proton donor; for dephosphorylation activity is the Asp180. The important for the catalytic mechanism of both phosphorylation and dephosphorylation stretch occupies residues 204–213 (MEIRGIGIID). Glu205 is a binding site for Mg(2+). Arg246 is a catalytic residue. The interval 267-272 (PVKVGR) is important for the catalytic mechanism of dephosphorylation.

The protein belongs to the HPrK/P family. As to quaternary structure, homohexamer. The cofactor is Mg(2+).

It catalyses the reaction [HPr protein]-L-serine + ATP = [HPr protein]-O-phospho-L-serine + ADP + H(+). The enzyme catalyses [HPr protein]-O-phospho-L-serine + phosphate + H(+) = [HPr protein]-L-serine + diphosphate. Its function is as follows. Catalyzes the ATP- as well as the pyrophosphate-dependent phosphorylation of a specific serine residue in HPr, a phosphocarrier protein of the phosphoenolpyruvate-dependent sugar phosphotransferase system (PTS). HprK/P also catalyzes the pyrophosphate-producing, inorganic phosphate-dependent dephosphorylation (phosphorolysis) of seryl-phosphorylated HPr (P-Ser-HPr). The two antagonistic activities of HprK/P are regulated by several intracellular metabolites, which change their concentration in response to the absence or presence of rapidly metabolisable carbon sources (glucose, fructose, etc.) in the growth medium. Therefore, by controlling the phosphorylation state of HPr, HPrK/P is a sensor enzyme that plays a major role in the regulation of carbon metabolism and sugar transport: it mediates carbon catabolite repression (CCR), and regulates PTS-catalyzed carbohydrate uptake and inducer exclusion. The chain is HPr kinase/phosphorylase from Lactobacillus gasseri (strain ATCC 33323 / DSM 20243 / BCRC 14619 / CIP 102991 / JCM 1131 / KCTC 3163 / NCIMB 11718 / NCTC 13722 / AM63).